We begin with the raw amino-acid sequence, 57 residues long: UPF0337 protein SAV_1088 (57 aa).

Composition is skewed to basic and acidic residues over residues 1-15 and 36-57; these read MAGDQKAKAKMEQAK and QAEKSKGDARQAKEKTKDVFKH. The interval 1-57 is disordered; sequence MAGDQKAKAKMEQAKGKAKAAAGRAVGNERMAAEGQAEKSKGDARQAKEKTKDVFKH.

Belongs to the UPF0337 (CsbD) family.

This is UPF0337 protein SAV_1088 from Streptomyces avermitilis (strain ATCC 31267 / DSM 46492 / JCM 5070 / NBRC 14893 / NCIMB 12804 / NRRL 8165 / MA-4680).